Reading from the N-terminus, the 191-residue chain is MFKNSFQSGFLSILYSIGSKPLQIWDKQIKNGHIKRITDQDIQSSVLEIMGTNVSTNFITAPADPKETLGIKLPFLVMIIKNLKKYFTFEVQVLDDKNVRRRFRASNYQSTTRVKPFICTMPMRLDEGWNQIQFNLSDFTRRAYGTNYIETLRVQIHANCRIRRIYFSDRLYSEEELPPEFKLFLPIQKQG.

The protein belongs to the CFAP20 family.

Its subcellular location is the cytoplasm. The protein localises to the cytoskeleton. The protein resides in the cilium basal body. It localises to the cell projection. It is found in the cilium. Its subcellular location is the cilium axoneme. Cilium- and flagellum-specific protein required for axonemal structure organization and motility. Microtubule inner protein (MIP) part of the dynein-decorated doublet microtubules (DMTs) in cilia axoneme, which is required for motile cilia beating. May also play a role in cortical organization of basal body. The protein is Cilia- and flagella-associated protein 20 (CFAP20) of Paramecium tetraurelia.